A 430-amino-acid chain; its full sequence is Adenylosuccinate synthetase (430 aa).

Residues 13 to 19 and 41 to 43 each bind GTP; these read GDEGKGK and GHT. The active-site Proton acceptor is Asp14. Residues Asp14 and Gly41 each coordinate Mg(2+). IMP is bound by residues 14 to 17, 39 to 42, Thr130, Arg144, Gln225, Thr240, and Arg304; these read DEGK and NAGH. The active-site Proton donor is His42. 300 to 306 is a binding site for substrate; it reads ATTGRAR. Residues Arg306, 332–334, and 414–416 contribute to the GTP site; these read KLD and STG.

The protein belongs to the adenylosuccinate synthetase family. In terms of assembly, homodimer. It depends on Mg(2+) as a cofactor.

It localises to the cytoplasm. It catalyses the reaction IMP + L-aspartate + GTP = N(6)-(1,2-dicarboxyethyl)-AMP + GDP + phosphate + 2 H(+). Its pathway is purine metabolism; AMP biosynthesis via de novo pathway; AMP from IMP: step 1/2. Functionally, plays an important role in the de novo pathway of purine nucleotide biosynthesis. Catalyzes the first committed step in the biosynthesis of AMP from IMP. This is Adenylosuccinate synthetase from Pseudomonas fluorescens (strain ATCC BAA-477 / NRRL B-23932 / Pf-5).